The following is a 1366-amino-acid chain: Protein HUA2-LIKE 2 (1366 aa).

The 58-residue stretch at 24 to 81 folds into the PWWP domain; it reads VGDLVLAKVKGFPAWPAVVSEPEKWDASPDSKKVFVHFFGTQQIAFCNPGDVEAFTEE. The span at 111–124 shows a compositional bias: basic and acidic residues; the sequence is LKQQERASDPKSAE. Disordered stretches follow at residues 111–138, 203–319, 384–403, 427–451, and 787–808; these read LKQQ…TLMP, TYSS…SGSK, NVQT…CEEN, EANS…AQTS, and SESA…TGEK. Residues 213-252 show a composition bias toward polar residues; it reads VRSQNCAPQNETCPVQRSKSPSRLQTEKLQSSMLQNSDGG. Positions 391–403 are enriched in basic and acidic residues; sequence SHEKFTERPCEEN. Residues 787-803 are compositionally biased toward polar residues; the sequence is SESANDMQNNSSGSPNI. The CID domain maps to 836-977; it reads DVQSTRESYE…HHIRELDSHS (142 aa). 2 disordered regions span residues 1027 to 1076 and 1128 to 1366; these read LKDE…TAER and TSHQ…QRSD. Positions 1032 to 1052 are enriched in acidic residues; that stretch reads GGSDSEGGCDSEGGSDSDGGD. Basic and acidic residues predominate over residues 1057 to 1066; the sequence is TPEHESRILE. Over residues 1138–1152 the composition is skewed to pro residues; it reads PPLPSSSPPPPPAPP. Residues 1191–1223 show a composition bias toward polar residues; that stretch reads LSGSTMHYQGPESSYISGVQLTNSIPQADGSNF. Residues 1229–1244 are compositionally biased toward pro residues; that stretch reads PSHPHPHPPPPPPPPQ. Basic and acidic residues-rich tracts occupy residues 1251–1262 and 1275–1298; these read EPGHVLKSHRDA and CDER…RDNW. Low complexity predominate over residues 1299–1309; the sequence is RYPPSSSYGSR.

As to expression, expressed throughout young primordia, and vegetative and reproductive apices.

The protein resides in the nucleus. Probable transcription factor that acts with partial redundancy with HULK1 and HULK3. Plays diverse and essential roles in the control of plant development, physiology and flowering time. The sequence is that of Protein HUA2-LIKE 2 from Arabidopsis thaliana (Mouse-ear cress).